The primary structure comprises 126 residues: Holo-[acyl-carrier-protein] synthase (126 aa).

Positions 9 and 58 each coordinate Mg(2+).

This sequence belongs to the P-Pant transferase superfamily. AcpS family. Requires Mg(2+) as cofactor.

It localises to the cytoplasm. The enzyme catalyses apo-[ACP] + CoA = holo-[ACP] + adenosine 3',5'-bisphosphate + H(+). Its function is as follows. Transfers the 4'-phosphopantetheine moiety from coenzyme A to a Ser of acyl-carrier-protein. The chain is Holo-[acyl-carrier-protein] synthase from Pectobacterium carotovorum subsp. carotovorum (strain PC1).